Here is a 933-residue protein sequence, read N- to C-terminus: Isoleucine--tRNA ligase (933 aa).

The 'HIGH' region motif lies at 57–67 (PYANGNIHVGH). Residue Glu554 participates in L-isoleucyl-5'-AMP binding. A 'KMSKS' region motif is present at residues 595–599 (KMSKS). Lys598 contacts ATP.

Belongs to the class-I aminoacyl-tRNA synthetase family. IleS type 1 subfamily. In terms of assembly, monomer.

It localises to the cytoplasm. It carries out the reaction tRNA(Ile) + L-isoleucine + ATP = L-isoleucyl-tRNA(Ile) + AMP + diphosphate. Functionally, catalyzes the attachment of isoleucine to tRNA(Ile). As IleRS can inadvertently accommodate and process structurally similar amino acids such as valine, to avoid such errors it has two additional distinct tRNA(Ile)-dependent editing activities. One activity is designated as 'pretransfer' editing and involves the hydrolysis of activated Val-AMP. The other activity is designated 'posttransfer' editing and involves deacylation of mischarged Val-tRNA(Ile). The polypeptide is Isoleucine--tRNA ligase (Streptococcus pyogenes serotype M6 (strain ATCC BAA-946 / MGAS10394)).